A 391-amino-acid chain; its full sequence is NADH-quinone oxidoreductase subunit D (391 aa).

The protein belongs to the complex I 49 kDa subunit family. NDH-1 is composed of 14 different subunits. Subunits NuoB, C, D, E, F, and G constitute the peripheral sector of the complex.

The protein resides in the cell inner membrane. The enzyme catalyses a quinone + NADH + 5 H(+)(in) = a quinol + NAD(+) + 4 H(+)(out). Its function is as follows. NDH-1 shuttles electrons from NADH, via FMN and iron-sulfur (Fe-S) centers, to quinones in the respiratory chain. The immediate electron acceptor for the enzyme in this species is believed to be ubiquinone. Couples the redox reaction to proton translocation (for every two electrons transferred, four hydrogen ions are translocated across the cytoplasmic membrane), and thus conserves the redox energy in a proton gradient. This chain is NADH-quinone oxidoreductase subunit D, found in Rickettsia massiliae (strain Mtu5).